The sequence spans 354 residues: Homer protein homolog 1 (354 aa).

The region spanning 1-110 is the WH1 domain; the sequence is MGEQPIFSTR…EKFQEFKEAA (110 aa). G2 is subject to N-acetylglycine. Residues 114 to 172 are disordered; it reads KEKSQEKMELTSTPSQESAGGDLQSPLTPESINGTDDERTPDLTQNSEPRPEPTQNALP. Polar residues-rich tracts occupy residues 138 to 147 and 155 to 172; these read SPLTPESING and DLTQ…NALP. Residues 181–352 adopt a coiled-coil conformation; the sequence is KHWEAELATL…LRDNLAKLLE (172 aa). The tract at residues 290–354 is required for tetramerization; sequence KLQEVEIRNK…DNLAKLLERS (65 aa). At S306 the chain carries Phosphoserine.

It belongs to the Homer family. As to quaternary structure, tetramer; this tetrameric structure is critical for forming the high-order complex with SHANK1, which in turn is necessary for the structural and functional integrity of dendritic spines. Interacts with GRM1, GRM5, ITPR1, DNM3, RYR1, RYR2 and SHANK3. Interacts with IFT57 and OPHN1. Encodes a coiled-coil structure that mediates homo- and heteromultimerization. Interacts with SHANK1; forms high-order polymerized complex with a mesh-like network structure, at least composed of SHANK1, HOMER1 and DLGAP1; the complex formation is SHANK1 multimerization dependent. Interacts with NFATC4. Interacts with DAGLA (via PPXXF motif); this interaction is required for the cell membrane localization of DAGLA. Interacts with SRGAP2.

It is found in the cytoplasm. It localises to the postsynaptic density. The protein localises to the synapse. The protein resides in the cell projection. Its subcellular location is the dendritic spine. In terms of biological role, postsynaptic density scaffolding protein. Binds and cross-links cytoplasmic regions of GRM1, GRM5, ITPR1, DNM3, RYR1, RYR2, SHANK1 and SHANK3. By physically linking GRM1 and GRM5 with ER-associated ITPR1 receptors, it aids the coupling of surface receptors to intracellular calcium release. May also couple GRM1 to PI3 kinase through its interaction with AGAP2. Forms a high-order complex with SHANK1, which in turn is necessary for the structural and functional integrity of dendritic spines. Negatively regulates T cell activation by inhibiting the calcineurin-NFAT pathway. Acts by competing with calcineurin/PPP3CA for NFAT protein binding, hence preventing NFAT activation by PPP3CA. The sequence is that of Homer protein homolog 1 from Bos taurus (Bovine).